Reading from the N-terminus, the 300-residue chain is Ribonuclease HIII (300 aa).

The RNase H type-2 domain maps to 83–300 (IPIIGSDEVG…THKAQALLTK (218 aa)). Residues D89, E90, and D194 each coordinate a divalent metal cation.

This sequence belongs to the RNase HII family. RnhC subfamily. It depends on Mn(2+) as a cofactor. The cofactor is Mg(2+).

It is found in the cytoplasm. It catalyses the reaction Endonucleolytic cleavage to 5'-phosphomonoester.. Its function is as follows. Endonuclease that specifically degrades the RNA of RNA-DNA hybrids. This is Ribonuclease HIII from Streptococcus pyogenes serotype M3 (strain ATCC BAA-595 / MGAS315).